A 393-amino-acid chain; its full sequence is MTVPDARKDLLVVNMGPHHPSMHGVLRLIVTLDGEDVIDCEPILGYLHRGMEKIAENRTIIQYLPYVTRWDYLATMFTEAITVNAPEELGNIQVPKRASYIRVIMLELSRIASHLLWLGPFMADIGAQTPFFYIFRERELLYDLFEAATGMRMMHNYFRIGGVAADLPHGWIDKCLDFCDYFLTGVVEYQKLITRNPIFLERVEGVGFIGGEEAINWGLSGPMLRASGIQWDLRKVDRYECYDEFDWEVQWQKEGDSLARYLVRIGEMTESIKIIQQALEGIPGGPYENLEFRRFAGTKDSELNDFEYRFISKKPSPSFELSKQELYVRVEAPKGELGIFLIGDNSVFPWRWKIRPPGFINLQILPQLVKRMKLADIMTILGSIDIIMGEVDR.

The protein belongs to the complex I 49 kDa subunit family. As to quaternary structure, NDH is composed of at least 16 different subunits, 5 of which are encoded in the nucleus.

It is found in the plastid. It localises to the chloroplast thylakoid membrane. The enzyme catalyses a plastoquinone + NADH + (n+1) H(+)(in) = a plastoquinol + NAD(+) + n H(+)(out). It carries out the reaction a plastoquinone + NADPH + (n+1) H(+)(in) = a plastoquinol + NADP(+) + n H(+)(out). NDH shuttles electrons from NAD(P)H:plastoquinone, via FMN and iron-sulfur (Fe-S) centers, to quinones in the photosynthetic chain and possibly in a chloroplast respiratory chain. The immediate electron acceptor for the enzyme in this species is believed to be plastoquinone. Couples the redox reaction to proton translocation, and thus conserves the redox energy in a proton gradient. This chain is NAD(P)H-quinone oxidoreductase subunit H, chloroplastic, found in Nuphar advena (Common spatterdock).